We begin with the raw amino-acid sequence, 339 residues long: MIRVAINGYGRIGRSILRALYESAKRDRIQIVAINELAKPEAMLHLTQYDTTHGRFHTQVKLDNQHMIIGDDAIKLLHEPNPANLPWKELDIDIVYEATGVINDRQECEAHLKAGAKQVLISHPSSNDVDATIVYGVNQDLLRAEHTVVSNASCTTNCIVPVIDVLDRHFEVKSGAITTIHSAMNDQQVIDAYHDDLRRTRAAGQSIIPVDTKLARGIERILPHMKNKFEAISVRVPTINVTAIDLSVTLNKRVDIELVNRVLKQATEGSFSGVVGFTNEPLVSCDFNHDPRSSIVDGTQTRVSDGHLVKLLLWCDNEWGFANRMLDTSLEMIKAKRSS.

11–12 (RI) provides a ligand contact to NAD(+). Substrate contacts are provided by residues 153-155 (SCT), arginine 199, 212-213 (TK), and arginine 235. The active-site Nucleophile is the cysteine 154. Asparagine 317 lines the NAD(+) pocket.

Belongs to the glyceraldehyde-3-phosphate dehydrogenase family. Epd subfamily. Homotetramer.

It localises to the cytoplasm. It carries out the reaction D-erythrose 4-phosphate + NAD(+) + H2O = 4-phospho-D-erythronate + NADH + 2 H(+). Its pathway is cofactor biosynthesis; pyridoxine 5'-phosphate biosynthesis; pyridoxine 5'-phosphate from D-erythrose 4-phosphate: step 1/5. In terms of biological role, catalyzes the NAD-dependent conversion of D-erythrose 4-phosphate to 4-phosphoerythronate. In Shewanella halifaxensis (strain HAW-EB4), this protein is D-erythrose-4-phosphate dehydrogenase.